The following is a 142-amino-acid chain: Salivary protein 15b (142 aa).

The signal sequence occupies residues 1–20; the sequence is MKYLGLALISAVFLIGTCQA. 3 disulfides stabilise this stretch: C27/C44, C40/C108, and C91/C117.

This sequence belongs to the PBP/GOBP family. As to expression, female salivary gland.

The protein localises to the secreted. In terms of biological role, inhibits contact coagulation pathway activation in the host by sequestering anionic polymers, such as dextran sulfate and heparin, and thus blocking interaction of protein components of the pathway with negatively charged surfaces. Inhibits dextran sulfate-mediated autoactivation of host coagulation factor XII (F12). Inhibits dextran sulfate-mediated activation of host factor XI (F11) by activated F12. Inhibits polyphosphate-induced plasma extravasation at the injection site in mouse model, probably via inhibition of bradykinin generation in host skin. This is Salivary protein 15b from Phlebotomus duboscqi (Sandfly).